The primary structure comprises 310 residues: Glutamyl-Q tRNA(Asp) synthetase (310 aa).

Residues 8 to 12 (RFAPS) and Glu44 each bind L-glutamate. Residues 11–21 (PSPTGPLHLGS) carry the 'HIGH' region motif. Zn(2+)-binding residues include Cys100, Cys102, Tyr123, and Cys127. 2 residues coordinate L-glutamate: Tyr183 and Arg201. Residues 239–243 (KLSKQ) carry the 'KMSKS' region motif. An ATP-binding site is contributed by Lys242.

This sequence belongs to the class-I aminoacyl-tRNA synthetase family. GluQ subfamily. Zn(2+) serves as cofactor.

Its function is as follows. Catalyzes the tRNA-independent activation of glutamate in presence of ATP and the subsequent transfer of glutamate onto a tRNA(Asp). Glutamate is transferred on the 2-amino-5-(4,5-dihydroxy-2-cyclopenten-1-yl) moiety of the queuosine in the wobble position of the QUC anticodon. This chain is Glutamyl-Q tRNA(Asp) synthetase, found in Cupriavidus metallidurans (strain ATCC 43123 / DSM 2839 / NBRC 102507 / CH34) (Ralstonia metallidurans).